Consider the following 599-residue polypeptide: Elongation factor 4 (599 aa).

The 183-residue stretch at 5-187 folds into the tr-type G domain; sequence SHIRNFSIIA…HLVRVIPPPQ (183 aa). Residues 17–22 and 134–137 each bind GTP; these read DHGKST and NKMD.

This sequence belongs to the TRAFAC class translation factor GTPase superfamily. Classic translation factor GTPase family. LepA subfamily.

It is found in the cell inner membrane. The enzyme catalyses GTP + H2O = GDP + phosphate + H(+). In terms of biological role, required for accurate and efficient protein synthesis under certain stress conditions. May act as a fidelity factor of the translation reaction, by catalyzing a one-codon backward translocation of tRNAs on improperly translocated ribosomes. Back-translocation proceeds from a post-translocation (POST) complex to a pre-translocation (PRE) complex, thus giving elongation factor G a second chance to translocate the tRNAs correctly. Binds to ribosomes in a GTP-dependent manner. This is Elongation factor 4 from Azotobacter vinelandii (strain DJ / ATCC BAA-1303).